A 312-amino-acid polypeptide reads, in one-letter code: MKVAVLGAAGGIGQALALLLKTQLPSGSELSLYDIAPVTPGVAVDLSHIPTAVKIKGFSGEDATPALEGADVVLISAGVARKPGMDRSDLFNVNAGIVKNLVQQVAKTCPKACIGIITNPVNTTVAIAAEVLKKAGVYDKNKLFGVTTLDIIRSNTFVAELKGKQPGEVEVPVIGGHSGVTILPLLSQVPGVSFTEQEVADLTKRIQNAGTEVVEAKAGGGSATLSMGQAAARFGLSLVRALQGEQGVIECAYVEGDGQYARFFSQPLLLGKNGVEERKSIGTLSAFEQNALEGMLDTLKKDIALGEEFVNK.

NAD(+) is bound by residues 7–13 (GAAGGIG) and Asp34. Substrate contacts are provided by Arg81 and Arg87. Residues Asn94 and 117–119 (ITN) contribute to the NAD(+) site. Substrate is bound by residues Asn119 and Arg153. The active-site Proton acceptor is the His177. Residue Met227 participates in NAD(+) binding.

The protein belongs to the LDH/MDH superfamily. MDH type 1 family. Homodimer.

It catalyses the reaction (S)-malate + NAD(+) = oxaloacetate + NADH + H(+). Functionally, catalyzes the reversible oxidation of malate to oxaloacetate. The protein is Malate dehydrogenase of Escherichia coli O6:K15:H31 (strain 536 / UPEC).